Here is a 521-residue protein sequence, read N- to C-terminus: Probable rhamnogalacturonase B (521 aa).

Residues 1 to 21 (MRLHAFTLLSLLGLVPSFAAA) form the signal peptide. Residues cysteine 42 and cysteine 68 are joined by a disulfide bond. Asparagine 145 is a glycosylation site (N-linked (GlcNAc...) asparagine). Catalysis depends on aspartate 219, which acts as the Proton donor. Cysteine 221 and cysteine 238 form a disulfide bridge. A glycan (N-linked (GlcNAc...) asparagine) is linked at asparagine 239. Residue histidine 294 is part of the active site. Asparagine 321 carries N-linked (GlcNAc...) asparagine glycosylation. Intrachain disulfides connect cysteine 344-cysteine 350 and cysteine 372-cysteine 381. Positions 462 to 521 (ETPAAASRSEQVVQGAPQETGQSAPESAGPVPSGNPGPVPTGGSRPSRHRHGHHHFGSAI) are disordered. A compositionally biased stretch (polar residues) spans 469 to 486 (RSEQVVQGAPQETGQSAP). The span at 507-521 (PSRHRHGHHHFGSAI) shows a compositional bias: basic residues.

Belongs to the glycosyl hydrolase 28 family.

The protein resides in the secreted. The enzyme catalyses Endohydrolysis of alpha-D-GalA-(1-&gt;2)-alpha-L-Rha glycosidic bond in the rhamnogalacturonan I backbone with initial inversion of anomeric configuration releasing oligosaccharides with beta-D-GalA at the reducing end.. Its function is as follows. Pectinolytic enzymes consist of four classes of enzymes: pectine lyase, polygalacturonase, pectin methylesterase and rhamnogalacturonase. Hydrolyzes alpha-D-galacturonopyranosyl-(1,2)-alpha-L-rhamnopyranosyl linkages in the backbone of the hairy regions of pectins. This chain is Probable rhamnogalacturonase B (rhgB), found in Aspergillus fumigatus (strain CBS 144.89 / FGSC A1163 / CEA10) (Neosartorya fumigata).